We begin with the raw amino-acid sequence, 295 residues long: Acetylglutamate kinase (295 aa).

Residues 70–71 (GG), R92, and N191 each bind substrate.

The protein belongs to the acetylglutamate kinase family. ArgB subfamily.

Its subcellular location is the cytoplasm. The enzyme catalyses N-acetyl-L-glutamate + ATP = N-acetyl-L-glutamyl 5-phosphate + ADP. The protein operates within amino-acid biosynthesis; L-arginine biosynthesis; N(2)-acetyl-L-ornithine from L-glutamate: step 2/4. Catalyzes the ATP-dependent phosphorylation of N-acetyl-L-glutamate. This chain is Acetylglutamate kinase, found in Mycolicibacterium paratuberculosis (strain ATCC BAA-968 / K-10) (Mycobacterium paratuberculosis).